The primary structure comprises 274 residues: Transcriptional activator PerA (274 aa).

One can recognise an HTH araC/xylS-type domain in the interval 168-265 (DRVIKVIELD…NTTPKKYNGV (98 aa)). DNA-binding regions (H-T-H motif) lie at residues 185-206 (GDVS…NKEN) and 232-255 (IDEI…KEYY).

In terms of biological role, could help in the transcriptional activator of eaeA expression in enteropathogenic E.coli. However, it seems that it is PerC which acts as an activator. The polypeptide is Transcriptional activator PerA (perA) (Escherichia coli O127:H6 (strain E2348/69 / EPEC)).